The following is a 674-amino-acid chain: Polyunsaturated fatty acid 5-lipoxygenase (674 aa).

The PLAT domain maps to 2-118 (PSYTVTVATG…EIVLRDGRAK (117 aa)). Residues glycine 17, threonine 18, aspartate 19, asparagine 44, aspartate 45, glutamate 47, aspartate 79, and aspartate 80 each coordinate Ca(2+). Positions 119 to 674 (LARDDQIHIL…PDRIPNSVAI (556 aa)) constitute a Lipoxygenase domain. Serine 272 is modified (phosphoserine). Positions 368 and 373 each coordinate Fe cation. Serine 524 bears the Phosphoserine mark. Positions 551, 555, and 674 each coordinate Fe cation.

This sequence belongs to the lipoxygenase family. As to quaternary structure, homodimer. Interacts with ALOX5AP and LTC4S. Interacts with COTL1, the interaction is required for stability and efficient catalytic activity. Interacts with PIK3R1; this interaction bridges ALOX5 with CD40 after CD40 ligation in B cells and leads to the production of reactive oxygen species (ROS). Interacts (via PLAT domain) with DICER1 (via Dicer dsRNA-binding fold domain); this interaction enhances arachidonate 5-lipoxygenase activity and modifies the miRNA precursor processing activity of DICER1. Requires Fe cation as cofactor. In terms of processing, serine phosphorylation by MAPKAPK2 is stimulated by arachidonic acid. Phosphorylation on Ser-524 by PKA has an inhibitory effect. Phosphorylation on Ser-272 prevents export from the nucleus. Phosphorylation at Ser-524 is stimulated by 8-bromo-3',5'-cyclic AMP or prostaglandin E2. In terms of tissue distribution, expressed in skin Langerhans cells and their emigrated counterparts in draining lymph nodes. Highly expressed in circulating leukocytes.

Its subcellular location is the cytoplasm. It localises to the nucleus matrix. The protein localises to the nucleus membrane. It is found in the perinuclear region. The protein resides in the cytosol. Its subcellular location is the nucleus envelope. It localises to the nucleus intermembrane space. It catalyses the reaction (5Z,8Z,11Z,14Z)-eicosatetraenoate + O2 = (5S)-hydroperoxy-(6E,8Z,11Z,14Z)-eicosatetraenoate. It carries out the reaction (5Z,8Z,11Z,14Z)-eicosatetraenoate + O2 = leukotriene A4 + H2O. The enzyme catalyses (5Z,8Z,11Z,14Z)-eicosatetraenoate + O2 = (8S)-hydroperoxy-(5Z,9E,11Z,14Z)-eicosatetraenoate. The catalysed reaction is (5Z,8Z,11Z,14Z)-eicosatetraenoate + O2 = (12S)-hydroperoxy-(5Z,8Z,10E,14Z)-eicosatetraenoate. It catalyses the reaction 18-HEPE + O2 = (5S)-hydroperoxy-18-hydroxy-(7E,9E,11Z,14Z,16E)-eicosapentaenoate. It carries out the reaction (18R)-hydroxy-(5Z,8Z,11Z,14Z,16E)-eicosapentaenoate + O2 = (5S)-hydroperoxy-(18R)-hydroxy-(6E,8Z,11Z,14Z,16E)-eicosapentaenoate. The enzyme catalyses (18S)-hydroxy-(5Z,8Z,11Z,14Z,16E)-eicosapentaenoate + O2 = (5S)-hydroperoxy-(18S)-hydroxy-(6E,8Z,11Z,14Z,16E)-eicosapentaenoate. The catalysed reaction is (5S)-hydroperoxy-(18S)-hydroxy-(6E,8Z,11Z,14Z,16E)-eicosapentaenoate = (5S,6S)-epoxy-(18S)-hydroxy-(7E,9E,11Z,14Z,16E)-eicosapentaenoate + H2O. It catalyses the reaction (5S)-hydroperoxy-(18R)-hydroxy-(6E,8Z,11Z,14Z,16E)-eicosapentaenoate = (5S,6S)-epoxy-(18R)-hydroxy-(7E,9E,11Z,14Z,16E)-eicosapentaenoate + H2O. It carries out the reaction (5S)-hydroperoxy-18-hydroxy-(7E,9E,11Z,14Z,16E)-eicosapentaenoate = (5S,6S)-epoxy-18-hydroxy-(7E,9E,11Z,14Z,16E)-eicosapentaenoate + H2O. The enzyme catalyses (15S)-hydroxy-(5Z,8Z,11Z,13E)-eicosatetraenoate + O2 = (5S)-hydroperoxy-(15S)-hydroxy-(6E,8Z,11Z,13E)-eicosatetraenoate. The catalysed reaction is (5S)-hydroperoxy-(6E,8Z,11Z,14Z)-eicosatetraenoate = leukotriene A4 + H2O. It catalyses the reaction (5Z,8Z)-eicosadienoate + O2 = (5S)-hydroperoxy-(6E,8Z)-eicosadienoate. It carries out the reaction (12S)-hydroxy-(5Z,8Z,10E,14Z)-eicosatetraenoate + O2 = (5S)-hydroperoxy-(12S)-hydroxy-(6E,8Z,10E,14Z)-eicosatetraenoate. The enzyme catalyses (5Z,8Z,11Z,14Z,17Z)-eicosapentaenoate + O2 = 5-hydroperoxy-(6E,8Z,11Z,14Z,17Z)-eicosapentaenoate. The catalysed reaction is (4Z,7Z,10Z,13Z,16Z,19Z)-docosahexaenoate + O2 = (14S)-hydroperoxy-(4Z,7Z,10Z,12E,16Z,19Z)-docosahexaenoate. It catalyses the reaction (4Z,7Z,10Z,13Z,16Z,19Z)-docosahexaenoate + O2 = (7S)-hydroperoxy-(4Z,8E,10Z,13Z,16Z,19Z)-docosahexaenoate. It carries out the reaction (4Z,7Z,10Z,13Z,16Z,19Z)-docosahexaenoate + O2 = (17S)-hydroperoxy-(4Z,7Z,10Z,13Z,15E,19Z)-docosahexaenoate. Its pathway is lipid metabolism; leukotriene A4 biosynthesis. Functionally, catalyzes the oxygenation of arachidonate to 5-hydroperoxyeicosatetraenoate (5-HPETE) followed by the dehydration to 5,6- epoxyeicosatetraenoate (Leukotriene A4/LTA4), the first two steps in the biosynthesis of leukotrienes, which are potent mediators of inflammation. Also catalyzes the oxygenation of arachidonic acid into 8-hydroperoxyicosatetraenoic acid (8-HPETE) and 12-hydroperoxyicosatetraenoic acid (12-HPETE). Displays lipoxin synthase activity being able to convert (15S)-HETE into a conjugate tetraene. Although arachidonate is the preferred substrate, this enzyme can also metabolize oxidized fatty acids derived from arachidonate such as (15S)-HETE, eicosapentaenoate (EPA) such as (18R)- and (18S)-HEPE or docosahexaenoate (DHA) which lead to the formation of specialized pro-resolving mediators (SPM) lipoxin and resolvins E and D respectively, therefore it participates in anti-inflammatory responses. Oxidation of DHA directly inhibits endothelial cell proliferation and sprouting angiogenesis via peroxisome proliferator-activated receptor gamma (PPARgamma). It does not catalyze the oxygenation of linoleic acid and does not convert (5S)-HETE to lipoxin isomers. In addition to inflammatory processes, participates in dendritic cell migration, wound healing through an antioxidant mechanism based on heme oxygenase-1 (HO-1) regulation expression, monocyte adhesion to the endothelium via ITGAM expression on monocytes. Moreover, it helps establish an adaptive humoral immunity by regulating primary resting B cells and follicular helper T cells and participates in the CD40-induced production of reactive oxygen species (ROS) after CD40 ligation in B cells through interaction with PIK3R1 that bridges ALOX5 with CD40. May also play a role in glucose homeostasis, regulation of insulin secretion and palmitic acid-induced insulin resistance via AMPK. Can regulate bone mineralization and fat cell differentiation increases in induced pluripotent stem cells. The protein is Polyunsaturated fatty acid 5-lipoxygenase of Mus musculus (Mouse).